Here is a 515-residue protein sequence, read N- to C-terminus: Bifunctional purine biosynthesis protein PurH (515 aa).

The MGS-like domain occupies 1 to 145 (MTKRALISVS…KNHASVTVVV (145 aa)).

This sequence belongs to the PurH family.

It carries out the reaction (6R)-10-formyltetrahydrofolate + 5-amino-1-(5-phospho-beta-D-ribosyl)imidazole-4-carboxamide = 5-formamido-1-(5-phospho-D-ribosyl)imidazole-4-carboxamide + (6S)-5,6,7,8-tetrahydrofolate. It catalyses the reaction IMP + H2O = 5-formamido-1-(5-phospho-D-ribosyl)imidazole-4-carboxamide. It participates in purine metabolism; IMP biosynthesis via de novo pathway; 5-formamido-1-(5-phospho-D-ribosyl)imidazole-4-carboxamide from 5-amino-1-(5-phospho-D-ribosyl)imidazole-4-carboxamide (10-formyl THF route): step 1/1. It functions in the pathway purine metabolism; IMP biosynthesis via de novo pathway; IMP from 5-formamido-1-(5-phospho-D-ribosyl)imidazole-4-carboxamide: step 1/1. This Streptococcus suis (strain 98HAH33) protein is Bifunctional purine biosynthesis protein PurH.